Here is a 494-residue protein sequence, read N- to C-terminus: MTESNRRDISWIFALLAAYFVLQVGVRLATSHSLDLDEAEQAFRSQWLAAGYGPQPPFYNWLQYTVFQFAGVSLTALSIVKNLLLFISYLLYGLTARLVLRDKALVAIATLGLLTIPQMAFEMQRDLTHTVAVFFSASIFFYGFIRSLKQPSLASYLIAGIGIGFGLLAKYNFAILPAAALIAALSDARLRPRIFDWRLGLTAAVALVITLPHLFWLKDNLDFATARTLEKMTASGDASYLTQVAMGVSSLALAIISFAALTVAVFAIVFGKSLRPALGSGSEWTRLLERMMLVFLAGILLLIVFGGAAGIKDRWLVPMLFILPLYFCLKIEAAGVETGKALRRFIPVVAVIMIGVPAALYGSVAAARFTGHYERLNRPYAGMLEILRKQAEPAAILAGDSLLAGNLRQDIPGVPILSADYPGFNPDLTSRRPLLLVWLLPKGGSEALPPDMAEWLQANLGTSAPEASVIDVPYFYGRGDDRYRFGYAWVNQPG.

10 consecutive transmembrane segments (helical) span residues 9-29 (ISWI…VRLA), 74-94 (LTAL…LYGL), 104-124 (ALVA…FEMQ), 127-147 (LTHT…FIRS), 156-176 (YLIA…FAIL), 197-217 (WRLG…LFWL), 251-271 (LALA…IVFG), 291-311 (MMLV…AAGI), 316-336 (LVPM…AAGV), and 345-365 (FIPV…GSVA).

The protein belongs to the glycosyltransferase 83 family.

The protein localises to the cell inner membrane. Its pathway is bacterial outer membrane biogenesis; LPS core biosynthesis. In terms of biological role, involved in the modification of the lipopolysaccharide (LPS) inner core. Catalyzes the transfer of a galacturonic acid (GalA) residue to the 5-position of the outer Kdo (3-deoxy-D-manno-octulosonic acid) residue of the LPS inner core, using dodecaprenyl phosphate-GalA as the donor substrate. Acts after the other GalA transferase RgtA. The chain is Lipopolysaccharide core galacturonosyltransferase RgtB from Rhizobium johnstonii (strain DSM 114642 / LMG 32736 / 3841) (Rhizobium leguminosarum bv. viciae).